A 320-amino-acid chain; its full sequence is ATP-dependent 6-phosphofructokinase (320 aa).

Residue G12 participates in ATP binding. 22–26 (RGVVR) contributes to the ADP binding site. Residues 73–74 (RF) and 103–106 (GDGS) contribute to the ATP site. D104 serves as a coordination point for Mg(2+). 126–128 (TID) provides a ligand contact to substrate. The active-site Proton acceptor is D128. Residue R155 participates in ADP binding. Substrate contacts are provided by residues R163 and 170-172 (MGR). ADP contacts are provided by residues 186–188 (GCE), K212, and 214–216 (KKH). Substrate is bound by residues E223, R244, and 250 to 253 (HIQR).

The protein belongs to the phosphofructokinase type A (PFKA) family. ATP-dependent PFK group I subfamily. Prokaryotic clade 'B1' sub-subfamily. In terms of assembly, homotetramer. Mg(2+) serves as cofactor.

It localises to the cytoplasm. It carries out the reaction beta-D-fructose 6-phosphate + ATP = beta-D-fructose 1,6-bisphosphate + ADP + H(+). Its pathway is carbohydrate degradation; glycolysis; D-glyceraldehyde 3-phosphate and glycerone phosphate from D-glucose: step 3/4. With respect to regulation, allosterically activated by ADP and other diphosphonucleosides, and allosterically inhibited by phosphoenolpyruvate. Functionally, catalyzes the phosphorylation of D-fructose 6-phosphate to fructose 1,6-bisphosphate by ATP, the first committing step of glycolysis. This Aliivibrio salmonicida (strain LFI1238) (Vibrio salmonicida (strain LFI1238)) protein is ATP-dependent 6-phosphofructokinase.